Here is a 138-residue protein sequence, read N- to C-terminus: MRILWIVAVCLIGAEGHLSQFGDMINKKTGIFGIMSYIYYGCYCGWGGKGKPLDATDRCCFVHDCCYGRVNGCDPKMGTYSYSFQNGDIVCGGDDPCLRAVCECDRVAAICFGENMNTYDKKYMLYSLFDCKEESEQC.

The signal sequence occupies residues 1 to 16 (MRILWIVAVCLIGAEG). Disulfide bonds link Cys42–Cys131, Cys44–Cys60, Cys59–Cys111, Cys65–Cys138, Cys66–Cys104, Cys73–Cys97, and Cys91–Cys102. Residues Tyr43, Gly45, and Gly47 each contribute to the Ca(2+) site. His63 is a catalytic residue. Asp64 contributes to the Ca(2+) binding site. Residue Asp105 is part of the active site.

This sequence belongs to the phospholipase A2 family. Group II subfamily. D49 sub-subfamily. Requires Ca(2+) as cofactor. In terms of tissue distribution, expressed by the venom gland.

The protein resides in the secreted. It catalyses the reaction a 1,2-diacyl-sn-glycero-3-phosphocholine + H2O = a 1-acyl-sn-glycero-3-phosphocholine + a fatty acid + H(+). In terms of biological role, snake venom phospholipase A2 (PLA2) that has enzymatic activity but is non-toxic. PLA2 catalyzes the calcium-dependent hydrolysis of the 2-acyl groups in 3-sn-phosphoglycerides. In Vipera ammodytes ammodytes (Western sand viper), this protein is Acidic phospholipase A2 ammodytin I1.